The chain runs to 72 residues: Beta-defensin 104A (72 aa).

The signal sequence occupies residues 1-22 (MRRLVLLLAISLLLYQDLPVRS). 3 cysteine pairs are disulfide-bonded: Cys-30–Cys-57, Cys-37–Cys-51, and Cys-41–Cys-58.

The protein belongs to the beta-defensin family.

It localises to the secreted. Functionally, has antimicrobial activity. In Gorilla gorilla gorilla (Western lowland gorilla), this protein is Beta-defensin 104A (DEFB104A).